Reading from the N-terminus, the 479-residue chain is Cardiolipin synthase A (479 aa).

2 helical membrane passes run 8–28 (FFGYLLGMIHLLGIVAALHAL) and 38–58 (IAWAMPLLFIPYLTLIPYLIF). 2 PLD phosphodiesterase domains span residues 218-245 (VNFRNHRKIVVVDGLLGFIGGHNVGDEY) and 392-419 (QPGFLHQKVVLVDDDVSAIGSANLDNRS). Catalysis depends on residues histidine 223, lysine 225, aspartate 230, histidine 397, lysine 399, and aspartate 404.

The protein belongs to the phospholipase D family. Cardiolipin synthase subfamily. ClsA sub-subfamily.

It localises to the cell inner membrane. The enzyme catalyses 2 a 1,2-diacyl-sn-glycero-3-phospho-(1'-sn-glycerol) = a cardiolipin + glycerol. Its function is as follows. Catalyzes the reversible phosphatidyl group transfer from one phosphatidylglycerol molecule to another to form cardiolipin (CL) (diphosphatidylglycerol) and glycerol. The polypeptide is Cardiolipin synthase A (Pseudomonas putida (strain ATCC 700007 / DSM 6899 / JCM 31910 / BCRC 17059 / LMG 24140 / F1)).